We begin with the raw amino-acid sequence, 194 residues long: Segregation and condensation protein B (194 aa).

It belongs to the ScpB family. As to quaternary structure, homodimer. Homodimerization may be required to stabilize the binding of ScpA to the Smc head domains. Component of a cohesin-like complex composed of ScpA, ScpB and the Smc homodimer, in which ScpA and ScpB bind to the head domain of Smc. The presence of the three proteins is required for the association of the complex with DNA.

It is found in the cytoplasm. Participates in chromosomal partition during cell division. May act via the formation of a condensin-like complex containing Smc and ScpA that pull DNA away from mid-cell into both cell halves. This is Segregation and condensation protein B from Brevibacillus brevis (strain 47 / JCM 6285 / NBRC 100599).